Reading from the N-terminus, the 238-residue chain is Small ribosomal subunit protein uS2 (238 aa).

Belongs to the universal ribosomal protein uS2 family.

The sequence is that of Small ribosomal subunit protein uS2 from Synechococcus sp. (strain CC9605).